We begin with the raw amino-acid sequence, 140 residues long: Profilin-1 (140 aa).

At A2 the chain carries N-acetylalanine. Residue S28 is modified to Phosphoserine. A Glycyl lysine isopeptide (Lys-Gly) (interchain with G-Cter in SUMO2); alternate cross-link involves residue K54. A Glycyl lysine isopeptide (Lys-Gly) (interchain with G-Cter in ubiquitin); alternate cross-link involves residue K54. S57 carries the post-translational modification Phosphoserine. N6-acetyllysine is present on K108. Position 129 is a phosphotyrosine (Y129). A Phosphoserine; by ROCK1 modification is found at S138.

Belongs to the profilin family. As to quaternary structure, found in a complex with XPO6, Ran, ACTB and PFN1. Interacts with ACTB. Interacts with VASP. Interacts with HTT. Interacts with SH3BGRL. Occurs in many kinds of cells as a complex with monomeric actin in a 1:1 ratio. Interacts with ACTMAP. Post-translationally, phosphorylation at Ser-138 reduces its affinity for G-actin and blocks its interaction with HTT, reducing its ability to inhibit androgen receptor (AR) and HTT aggregation.

Its subcellular location is the cytoplasm. It is found in the cytoskeleton. Binds to actin and affects the structure of the cytoskeleton. At high concentrations, profilin prevents the polymerization of actin, whereas it enhances it at low concentrations. By binding to PIP2, it inhibits the formation of IP3 and DG. Inhibits androgen receptor (AR) and HTT aggregation and binding of G-actin is essential for its inhibition of AR. The protein is Profilin-1 (Pfn1) of Mus musculus (Mouse).